The following is a 263-amino-acid chain: Endonuclease 8 (263 aa).

The active-site Schiff-base intermediate with DNA is the Pro-2. Glu-3 serves as the catalytic Proton donor. Lys-53 (proton donor; for beta-elimination activity) is an active-site residue. The DNA site is built by Gln-70, Arg-125, and Asn-169. Residues 229–263 (KVFHRDGEACERCGGIIEKTTLSSRPFYWCAHCQK) form an FPG-type zinc finger. Residue Arg-253 is the Proton donor; for delta-elimination activity of the active site.

Belongs to the FPG family. Zn(2+) is required as a cofactor.

It carries out the reaction 2'-deoxyribonucleotide-(2'-deoxyribose 5'-phosphate)-2'-deoxyribonucleotide-DNA = a 3'-end 2'-deoxyribonucleotide-(2,3-dehydro-2,3-deoxyribose 5'-phosphate)-DNA + a 5'-end 5'-phospho-2'-deoxyribonucleoside-DNA + H(+). In terms of biological role, involved in base excision repair of DNA damaged by oxidation or by mutagenic agents. Acts as a DNA glycosylase that recognizes and removes damaged bases. Has a preference for oxidized pyrimidines, such as thymine glycol, 5,6-dihydrouracil and 5,6-dihydrothymine. Has AP (apurinic/apyrimidinic) lyase activity and introduces nicks in the DNA strand. Cleaves the DNA backbone by beta-delta elimination to generate a single-strand break at the site of the removed base with both 3'- and 5'-phosphates. The sequence is that of Endonuclease 8 from Salmonella typhi.